We begin with the raw amino-acid sequence, 115 residues long: Large ribosomal subunit protein bL20c (115 aa).

Belongs to the bacterial ribosomal protein bL20 family.

The protein resides in the plastid. It localises to the chloroplast. In terms of biological role, binds directly to 23S ribosomal RNA and is necessary for the in vitro assembly process of the 50S ribosomal subunit. It is not involved in the protein synthesizing functions of that subunit. The polypeptide is Large ribosomal subunit protein bL20c (Pleurastrum terricola (Filamentous green alga)).